The sequence spans 282 residues: MEMO1 family protein Msed_2139 (282 aa).

It belongs to the MEMO1 family.

The protein is MEMO1 family protein Msed_2139 of Metallosphaera sedula (strain ATCC 51363 / DSM 5348 / JCM 9185 / NBRC 15509 / TH2).